We begin with the raw amino-acid sequence, 219 residues long: Transcriptional regulatory protein QseB (219 aa).

In terms of domain architecture, Response regulatory spans 2–116 (RILLIEDDML…EVAARLEALM (115 aa)). A 4-aspartylphosphate modification is found at aspartate 51. A DNA-binding region (ompR/PhoB-type) is located at residues 124-218 (SNELRHGNVM…VHGIGYTLGE (95 aa)).

In terms of processing, phosphorylated by QseC.

The protein localises to the cytoplasm. Member of a two-component regulatory system QseB/QseC. Activates the flagella regulon by activating transcription of FlhDC. Currently it is not known whether this effect is direct or not. The sequence is that of Transcriptional regulatory protein QseB (qseB) from Escherichia coli O157:H7.